The following is a 715-amino-acid chain: MTTTSAFMLNVRLDNVAVVAIDVPGEKVNTLKAEFAAQVRAILKQIRENKALQGVVFISAKADNFIAGADINMIGHCQNAQEAETLARQGQQLMAEIQALPVPVIAAIHGACLGGGLEMALACHRRICTDDVKTVLGLPEVQLGLLPGSGGTQRLPRLVGVSTALDMILTGKQLRARQALKAGLVDDVVPQTILLEAAVELAKKERLAQRTLPVRERILAGPLGRALLFRLVRKKTAQKTQGNYPATERIIDVIETGLAQGSSSGYDAEARAFGELAMTPQSQALRAIFFASTKVKKDPGSDAPPGPLNSVGILGGGLMGGGIAWVTACKGGLPVRIKDINTQGINHALKYSWDLLETKVRRRHIKASERDKQLALISGSTDYRGFSHRDLVIEAVFEDLPLKQQMVAEVEQNCAAHTIFASNTSSLPIGDIAANAARPEQVIGLHFFSPVEKMPLVEVIPHASTSAQTIATTVKLAKKQGKTPIVVSDKAGFYVNRILAPYINEAIRMLTEGERVEHIDAALVKFGFPVGPIQLLDEVGIDTGTKIIPVLEAAYGERFSAPANVVASILNDDRKGRKNGRGFYLYGEKGRKSKKQVDPAIYKLIGVQGQSRLSAQQVAERCVMLMLNEAARCFDEKVIRSARDGDIGAVFGIGFPPFLGGPFRYMDALGPGEMVATLQRLAALYGPRYAPCEQLVRMAERREHFWTNGETDQGN.

The interval 1–190 (MTTTSAFMLN…KAGLVDDVVP (190 aa)) is enoyl-CoA hydratase. Residues 306-714 (GPLNSVGILG…FWTNGETDQG (409 aa)) are 3-hydroxyacyl-CoA dehydrogenase.

In the N-terminal section; belongs to the enoyl-CoA hydratase/isomerase family. This sequence in the central section; belongs to the 3-hydroxyacyl-CoA dehydrogenase family. As to quaternary structure, heterotetramer of two alpha chains (FadJ) and two beta chains (FadI).

Its subcellular location is the cytoplasm. It catalyses the reaction a (3S)-3-hydroxyacyl-CoA = a (2E)-enoyl-CoA + H2O. The catalysed reaction is a 4-saturated-(3S)-3-hydroxyacyl-CoA = a (3E)-enoyl-CoA + H2O. It carries out the reaction a (3S)-3-hydroxyacyl-CoA + NAD(+) = a 3-oxoacyl-CoA + NADH + H(+). The enzyme catalyses (3S)-3-hydroxybutanoyl-CoA = (3R)-3-hydroxybutanoyl-CoA. The protein operates within lipid metabolism; fatty acid beta-oxidation. In terms of biological role, catalyzes the formation of a hydroxyacyl-CoA by addition of water on enoyl-CoA. Also exhibits 3-hydroxyacyl-CoA epimerase and 3-hydroxyacyl-CoA dehydrogenase activities. The polypeptide is Fatty acid oxidation complex subunit alpha (Salmonella choleraesuis (strain SC-B67)).